The chain runs to 801 residues: Phenylalanine--tRNA ligase beta subunit (801 aa).

One can recognise a tRNA-binding domain in the interval 39-153 (AEGLSKLVVG…EGAIPGDSIF (115 aa)). Positions 406–481 (TEPVEVSTTL…RIYGYEKLPT (76 aa)) constitute a B5 domain. 4 residues coordinate Mg(2+): Asp-459, Asp-465, Glu-468, and Glu-469. In terms of domain architecture, FDX-ACB spans 708–801 (TKYPSVSRDI…LVEKVNAEIR (94 aa)).

The protein belongs to the phenylalanyl-tRNA synthetase beta subunit family. Type 1 subfamily. In terms of assembly, tetramer of two alpha and two beta subunits. It depends on Mg(2+) as a cofactor.

It is found in the cytoplasm. It catalyses the reaction tRNA(Phe) + L-phenylalanine + ATP = L-phenylalanyl-tRNA(Phe) + AMP + diphosphate + H(+). This chain is Phenylalanine--tRNA ligase beta subunit, found in Streptococcus agalactiae serotype V (strain ATCC BAA-611 / 2603 V/R).